A 350-amino-acid polypeptide reads, in one-letter code: Probable poly-beta-1,6-N-acetyl-D-glucosamine export protein (350 aa).

Helical transmembrane passes span 7-29 (ELVY…TQIT), 44-66 (FYIR…LLTT), 79-101 (TRVK…SESL), 116-138 (LLGQ…SYII), 145-167 (LFNS…YYFT), 187-204 (IIFG…MGYN), 211-233 (FLER…FIAL), 243-262 (SFSY…ILGI), 269-291 (ILFN…HPII), and 306-328 (TMVF…GMIL).

The protein belongs to the acyltransferase 3 family.

It is found in the cell membrane. Its function is as follows. Presumably involved in the export of the biofilm adhesin polysaccharide poly-beta-1,6-N-acetyl-D-glucosamine (PNAG, also referred to as PIA) across the cell membrane. This chain is Probable poly-beta-1,6-N-acetyl-D-glucosamine export protein (icaC), found in Staphylococcus aureus (strain Mu50 / ATCC 700699).